We begin with the raw amino-acid sequence, 169 residues long: Succinate dehydrogenase cytochrome b560 subunit, mitochondrial (169 aa).

A mitochondrion-targeting transit peptide spans 1–29 (MAALLLRHVGRHCLRAHFSPQLCIRNAVP). At 30–65 (LGTTAKEEMERFWNKNIGSNRPLSPHITIYSWSLPM) the chain is on the mitochondrial matrix side. A helical membrane pass occupies residues 66 to 90 (AMSICHRGTGIALSAGVSLFGMSAL). Residues 91–110 (LLPGNFESYLELVKSLCLGP) are Mitochondrial intermembrane-facing. Residues 111–139 (ALIHTAKFALVFPLMYHTWNGIRHLMWDL) traverse the membrane as a helical segment. H127 contacts heme b. Over 140–146 (GKGLKIP) the chain is Mitochondrial matrix. The helical transmembrane segment at 147-167 (QLYQSGVVVLVLTVLSSMGLA) threads the bilayer. The Mitochondrial intermembrane segment spans residues 168–169 (AM).

The protein belongs to the cytochrome b560 family. In terms of assembly, component of complex II composed of four subunits: the flavoprotein (FP) SDHA, iron-sulfur protein (IP) SDHB, and a cytochrome b560 composed of SDHC and SDHD. Requires heme b as cofactor.

Its subcellular location is the mitochondrion inner membrane. It participates in carbohydrate metabolism; tricarboxylic acid cycle. Its function is as follows. Membrane-anchoring subunit of succinate dehydrogenase (SDH) that is involved in complex II of the mitochondrial electron transport chain and is responsible for transferring electrons from succinate to ubiquinone (coenzyme Q). SDH also oxidizes malate to the non-canonical enol form of oxaloacetate, enol-oxaloacetate. Enol-oxaloacetate, which is a potent inhibitor of the succinate dehydrogenase activity, is further isomerized into keto-oxaloacetate. The protein is Succinate dehydrogenase cytochrome b560 subunit, mitochondrial (SDHC) of Homo sapiens (Human).